We begin with the raw amino-acid sequence, 146 residues long: Small ribosomal subunit protein uS5 (146 aa).

Positions 8 to 71 (FKEVVVNIGR…DDAFKNIIKV (64 aa)) constitute an S5 DRBM domain.

The protein belongs to the universal ribosomal protein uS5 family. As to quaternary structure, part of the 30S ribosomal subunit. Contacts proteins S4 and S8.

In terms of biological role, with S4 and S12 plays an important role in translational accuracy. Its function is as follows. Located at the back of the 30S subunit body where it stabilizes the conformation of the head with respect to the body. This Wolinella succinogenes (strain ATCC 29543 / DSM 1740 / CCUG 13145 / JCM 31913 / LMG 7466 / NCTC 11488 / FDC 602W) (Vibrio succinogenes) protein is Small ribosomal subunit protein uS5.